A 287-amino-acid chain; its full sequence is Fructose-bisphosphate aldolase (287 aa).

S50 serves as a coordination point for D-glyceraldehyde 3-phosphate. The active-site Proton donor is the D85. The Zn(2+) site is built by H86, D107, E137, and H181. G182 serves as a coordination point for dihydroxyacetone phosphate. Residue H209 participates in Zn(2+) binding. Dihydroxyacetone phosphate is bound by residues 210-212 (GGT) and 231-234 (NVNT). T212 and T234 each carry phosphothreonine.

It belongs to the class II fructose-bisphosphate aldolase family. The cofactor is Zn(2+).

The catalysed reaction is beta-D-fructose 1,6-bisphosphate = D-glyceraldehyde 3-phosphate + dihydroxyacetone phosphate. Its pathway is carbohydrate degradation; glycolysis; D-glyceraldehyde 3-phosphate and glycerone phosphate from D-glucose: step 4/4. Its function is as follows. Catalyzes the aldol condensation of dihydroxyacetone phosphate (DHAP or glycerone-phosphate) with glyceraldehyde 3-phosphate (G3P) to form fructose 1,6-bisphosphate (FBP) in gluconeogenesis and the reverse reaction in glycolysis. This is Fructose-bisphosphate aldolase (fba) from Geobacillus stearothermophilus (Bacillus stearothermophilus).